Here is a 726-residue protein sequence, read N- to C-terminus: Fatty acid oxidation complex subunit alpha (726 aa).

The segment at 1 to 189 (MIYQGENLSV…KIGMVDGIVS (189 aa)) is enoyl-CoA hydratase/isomerase. D296 provides a ligand contact to substrate. Positions 311-726 (EPVKNAAVLG…PKSSVSSPSV (416 aa)) are 3-hydroxyacyl-CoA dehydrogenase. NAD(+) is bound by residues M324, D343, 400–402 (VVE), K407, and S429. Residue H450 is the For 3-hydroxyacyl-CoA dehydrogenase activity of the active site. An NAD(+)-binding site is contributed by N453. Substrate-binding residues include N500 and Y660.

This sequence in the N-terminal section; belongs to the enoyl-CoA hydratase/isomerase family. In the C-terminal section; belongs to the 3-hydroxyacyl-CoA dehydrogenase family. In terms of assembly, heterotetramer of two alpha chains (FadB) and two beta chains (FadA).

It catalyses the reaction a (3S)-3-hydroxyacyl-CoA + NAD(+) = a 3-oxoacyl-CoA + NADH + H(+). The catalysed reaction is a (3S)-3-hydroxyacyl-CoA = a (2E)-enoyl-CoA + H2O. The enzyme catalyses a 4-saturated-(3S)-3-hydroxyacyl-CoA = a (3E)-enoyl-CoA + H2O. It carries out the reaction (3S)-3-hydroxybutanoyl-CoA = (3R)-3-hydroxybutanoyl-CoA. It catalyses the reaction a (3Z)-enoyl-CoA = a 4-saturated (2E)-enoyl-CoA. The catalysed reaction is a (3E)-enoyl-CoA = a 4-saturated (2E)-enoyl-CoA. The protein operates within lipid metabolism; fatty acid beta-oxidation. Involved in the aerobic and anaerobic degradation of long-chain fatty acids via beta-oxidation cycle. Catalyzes the formation of 3-oxoacyl-CoA from enoyl-CoA via L-3-hydroxyacyl-CoA. It can also use D-3-hydroxyacyl-CoA and cis-3-enoyl-CoA as substrate. This is Fatty acid oxidation complex subunit alpha from Aliivibrio salmonicida (strain LFI1238) (Vibrio salmonicida (strain LFI1238)).